We begin with the raw amino-acid sequence, 119 residues long: Beta-2-microglobulin (119 aa).

The N-terminal stretch at 1-20 (MARFVVVALLVLLSVSDLEA) is a signal peptide. Residues 25-114 (PKIQVYSRYP…VTFLTPKTVK (90 aa)) form the Ig-like C1-type domain. Cysteine 45 and cysteine 100 form a disulfide bridge.

This sequence belongs to the beta-2-microglobulin family. Heterodimer of an alpha chain and a beta chain. Beta-2-microglobulin is the beta-chain of major histocompatibility complex class I molecules.

It is found in the secreted. Functionally, component of the class I major histocompatibility complex (MHC). Involved in the presentation of peptide antigens to the immune system. In Leontocebus fuscicollis (Brown-mantled tamarin), this protein is Beta-2-microglobulin (B2M).